A 765-amino-acid chain; its full sequence is Zinc transporter ZIP6 (765 aa).

The signal sequence occupies residues 1 to 20 (MATDLSVIMILTFALWVTSP). The Extracellular portion of the chain corresponds to 21-335 (LHELQSTAAF…PKTYSLQIAW (315 aa)). A glycan (N-linked (GlcNAc...) asparagine) is linked at Asn68. Composition is skewed to basic and acidic residues over residues 96–135 (DHEH…DHEH) and 174–186 (RPAE…RNIK). 2 disordered regions span residues 96–196 (DHEH…EVTS) and 209–257 (VETI…SEPR). The segment covering 187–196 (ESASSSEVTS) has biased composition (low complexity). Residues 224–233 (VNPSTPPSIT) show a composition bias toward polar residues. Residues 238 to 247 (VGRLSRLARK) are compositionally biased toward basic residues. The span at 248 to 257 (KSNESVSEPR) shows a compositional bias: basic and acidic residues. Residues Asn250, Asn275, and Asn292 are each glycosylated (N-linked (GlcNAc...) asparagine). The chain crosses the membrane as a helical span at residues 336-356 (LGGFIAISIISFLSLLGVILV). At 357-365 (PLMNRVFFK) the chain is on the cytoplasmic side. The chain crosses the membrane as a helical span at residues 366–386 (FLLSFLVALAVGTLSGDALLH). Topologically, residues 387 to 433 (LLPHSHASHQHSHSHEEPAMEMKRGPLFSHLSAQNIEESSYFDSTWK) are extracellular. A helical transmembrane segment spans residues 434-454 (GLTALGGLYFMFLVEHVLTLI). Topologically, residues 455-667 (KQFKDKKKKN…LKAGMTVKQA (213 aa)) are cytoplasmic. Residues 458–519 (KDKKKKNQKK…EPSPFDSQQP (62 aa)) form a disordered region. Positions 475 to 495 (ESKKQLSKYDSQLSSNEEKVD) form a coiled coil. Residues Ser481 and Ser488 each carry the phosphoserine modification. The segment covering 490–508 (NEEKVDPGERPESYLRADS) has biased composition (basic and acidic residues). The span at 509-519 (QEPSPFDSQQP) shows a compositional bias: polar residues. Residues 668–688 (VLYNALSAMLAYLGMATGIFI) form a helical membrane-spanning segment. Residues 689 to 696 (GHYAENVS) are Extracellular-facing. Asn694 is a glycosylation site (N-linked (GlcNAc...) asparagine). A helical membrane pass occupies residues 697-717 (MWIFALTAGLFMYVALVDMVP). The Cytoplasmic portion of the chain corresponds to 718 to 734 (EMLHNDASDHGCSRWGY). A helical membrane pass occupies residues 735–755 (FFLQNAGILLGFGIMLLISIF). Topologically, residues 756-765 (EHKIVFRINF) are extracellular.

This sequence belongs to the ZIP transporter (TC 2.A.5) family. Interacts with SLC39A10; which triggers cells to undergo EMT and mitosis. Found in a complex with SLC39A6, SLC39A10 and with the 'Ser-727' phosphorylated form of STAT3 throughout mitosis. Found in a complex with SLC39A6, SLC39A10 and with NCAM1; this complex controls NCAM1 phosphorylation and integration into focal adhesion complexes during epithelial-to-mesenchymal transition (EMT). Found in a complex with SLC39A6, SLC39A10 and with GSK3B that controls NCAM1 phosphorylation. Post-translationally, cleaved on the N-terminus before locating to the plasma membrane. In terms of processing, N-glycosylated. Phosphorylated by ZAP70 in response to TCR stimulation leading to its activation. Highly expressed in the brain and testis. In the brain strongly expressed in the CA1 and CA3 regions, Purkinje cells in cerebellum and dentate gyrus in hippocampus. In testis found in spermatids or mature sperms in the central areas of seminiferous tubules.

Its subcellular location is the cell membrane. The protein localises to the cell projection. The protein resides in the lamellipodium membrane. It is found in the membrane raft. It localises to the apical cell membrane. The enzyme catalyses Zn(2+)(in) = Zn(2+)(out). Zinc-influx transporter which plays a role in zinc homeostasis and in the induction of epithelial-to-mesenchymal transition (EMT). When associated with SLC39A10, the heterodimer formed by SLC39A10 and SLC39A6 mediates cellular zinc uptake to trigger cells to undergo epithelial- to-mesenchymal transition (EMT). The SLC39A10-SLC39A6 heterodimer also controls NCAM1 phosphorylation and its integration into focal adhesion complexes during EMT. Zinc influx inactivates GSK3B, enabling unphosphorylated SNAI1 in the nucleus to down-regulate adherence genes such as E-cadherin, causing loss of cell adherence. In addition, the SLC39A10-SLC39A6 heterodimer plays an essentiel role in initiating mitosis by importing zinc into cells to initiate a pathway resulting in the onset of mitosis. Participates in the T-cell receptor signaling regulation by mediating cellular zinc uptake into activated lymphocytes. Regulates the zinc influx necessary for proper meiotic progression to metaphase II (MII) that allows the oocyte-to-egg transition. The sequence is that of Zinc transporter ZIP6 from Mus musculus (Mouse).